Here is a 320-residue protein sequence, read N- to C-terminus: Histidine decarboxylase proenzyme (320 aa).

Residues 2–11 constitute a propeptide that is removed on maturation; sequence NKNLEANRNR. At Ser-98 the chain carries Pyruvic acid (Ser). Glu-215 (proton donor) is an active-site residue.

The proenzyme is a hexamer of identical pi chains; each pi chain monomer is cleaved to form a small (or beta) chain and a large (or alpha) chain by non-hydrolytic self-catalysis. Pyruvate serves as cofactor.

It carries out the reaction L-histidine + H(+) = histamine + CO2. This chain is Histidine decarboxylase proenzyme (hdc), found in Clostridium perfringens (strain ATCC 13124 / DSM 756 / JCM 1290 / NCIMB 6125 / NCTC 8237 / Type A).